We begin with the raw amino-acid sequence, 121 residues long: Large ribosomal subunit protein bL19 (121 aa).

This sequence belongs to the bacterial ribosomal protein bL19 family.

This protein is located at the 30S-50S ribosomal subunit interface and may play a role in the structure and function of the aminoacyl-tRNA binding site. This chain is Large ribosomal subunit protein bL19, found in Gloeobacter violaceus (strain ATCC 29082 / PCC 7421).